The primary structure comprises 79 residues: Small ribosomal subunit protein bS18B (79 aa).

It belongs to the bacterial ribosomal protein bS18 family. Part of the 30S ribosomal subunit. Forms a tight heterodimer with protein bS6.

Functionally, binds as a heterodimer with protein bS6 to the central domain of the 16S rRNA, where it helps stabilize the platform of the 30S subunit. The polypeptide is Small ribosomal subunit protein bS18B (Mycolicibacterium gilvum (strain PYR-GCK) (Mycobacterium gilvum (strain PYR-GCK))).